Here is a 349-residue protein sequence, read N- to C-terminus: N-acetyltaurine hydrolase (349 aa).

The a divalent metal cation site is built by His-26, His-28, Glu-169, His-201, His-230, and Asp-298.

The protein belongs to the metallo-dependent hydrolases superfamily. Phosphotriesterase family. The cofactor is a divalent metal cation.

It is found in the cytoplasm. It localises to the cytosol. The enzyme catalyses N-acetyltaurine + H2O = taurine + acetate. It catalyses the reaction N-propanoyltaurine + H2O = propanoate + taurine. The catalysed reaction is N-acetyl-L-methionine + H2O = L-methionine + acetate. It carries out the reaction N-acetyl-L-isoleucine + H2O = L-isoleucine + acetate. The enzyme catalyses N-acetyl-L-leucine + H2O = L-leucine + acetate. It catalyses the reaction N-acetyl-L-valine + H2O = L-valine + acetate. In terms of biological role, N-acetyltaurine hydrolase that catalyzes the hydrolysis of N-acetyltaurine into taurine and acetate. PTER also acts on other N-acetyl amino acids (Met, Ile, Leu, Val) and N-propionyltaurine, but at lower rates. The protein is N-acetyltaurine hydrolase (pter) of Danio rerio (Zebrafish).